A 563-amino-acid polypeptide reads, in one-letter code: Developmental regulatory protein wetA (563 aa).

2 stretches are compositionally biased toward polar residues: residues 54–69 (EQSP…THPS) and 160–175 (HKQS…SQFQ). 6 disordered regions span residues 54-81 (EQSP…SLPP), 112-176 (ASST…QFQK), 272-318 (SNNS…PDLQ), 334-356 (PQRQ…IQNT), 430-494 (PQLH…SPKG), and 516-538 (GVAP…DRRR). The segment covering 272–305 (SNNSTVTSSPPSADDIFPSPHSSDPQSMSSWHSD) has biased composition (low complexity). Polar residues predominate over residues 430–441 (PQLHPQSRSPSL).

Belongs to the wetA family.

Its function is as follows. BrlA, abaA and wetA are pivotal regulators of conidiophore development and conidium maturation. They act individually and together to regulate their own expression and that of numerous other sporulation-specific genes. The chain is Developmental regulatory protein wetA from Aspergillus oryzae (strain ATCC 42149 / RIB 40) (Yellow koji mold).